The following is a 98-amino-acid chain: Integration host factor subunit beta (98 aa).

It belongs to the bacterial histone-like protein family. In terms of assembly, heterodimer of an alpha and a beta chain.

In terms of biological role, this protein is one of the two subunits of integration host factor, a specific DNA-binding protein that functions in genetic recombination as well as in transcriptional and translational control. The chain is Integration host factor subunit beta from Pseudomonas fluorescens (strain Pf0-1).